Here is an 823-residue protein sequence, read N- to C-terminus: Dimethyl sulfoxide/trimethylamine N-oxide reductase (823 aa).

Residues 1-42 (MTKFSGNELRAELYRRAFLSYSVAPGALGMFGRSLLAKGARA) constitute a signal peptide (tat-type signal). Mo-bis(molybdopterin guanine dinucleotide) is bound by residues 156 to 160 (YGWKS), Trp-158, Ser-189, 232 to 233 (KT), 262 to 263 (ID), 283 to 285 (QTD), 364 to 365 (WS), Arg-368, Asn-476, His-480, 500 to 501 (HD), Arg-523, Asp-553, 685 to 686 (HP), 691 to 693 (HSQ), Asn-779, and 796 to 797 (GQ).

In terms of assembly, homodimer. It depends on Mo-bis(molybdopterin guanine dinucleotide) as a cofactor. Post-translationally, predicted to be exported by the Tat system. The position of the signal peptide cleavage has been experimentally proven.

It localises to the periplasm. It catalyses the reaction dimethyl sulfide + a menaquinone + H2O = dimethyl sulfoxide + a menaquinol. The catalysed reaction is trimethylamine + 2 Fe(III)-[cytochrome c] + H2O = trimethylamine N-oxide + 2 Fe(II)-[cytochrome c] + 3 H(+). Its function is as follows. Catalyzes the reduction of dimethyl sulfoxide (DMSO) and trimethylamine N-oxide (TMAO) to dimethyl sulfide (DMS) and trimethylamine, respectively. The terminal DMSO reductase can also use various sulfoxides and N-oxide compounds as terminal electron acceptor in addition to DMSO and TMAO. The protein is Dimethyl sulfoxide/trimethylamine N-oxide reductase (dorA) of Rhodobacter capsulatus (Rhodopseudomonas capsulata).